The following is a 343-amino-acid chain: Phosphatidylglycerol--prolipoprotein diacylglyceryl transferase (343 aa).

The next 4 membrane-spanning stretches (helical) occupy residues 22-42 (IPIR…LIIG), 54-74 (GVIY…GRLY), 97-117 (VWEG…GAWI), and 123-143 (GIPL…AQAI). Arg145 serves as a coordination point for a 1,2-diacyl-sn-glycero-3-phospho-(1'-sn-glycerol). Transmembrane regions (helical) follow at residues 193 to 213 (VVHP…VLLI) and 257 to 277 (VNSF…LLAP). The segment at 283–343 (PATLGGTPSS…SADNSGIVEK (61 aa)) is disordered. Acidic residues predominate over residues 295-325 (GGDDTAETEATADTEDTEDTEDGVTDAPEAD).

Belongs to the Lgt family.

The protein resides in the cell membrane. The enzyme catalyses L-cysteinyl-[prolipoprotein] + a 1,2-diacyl-sn-glycero-3-phospho-(1'-sn-glycerol) = an S-1,2-diacyl-sn-glyceryl-L-cysteinyl-[prolipoprotein] + sn-glycerol 1-phosphate + H(+). It functions in the pathway protein modification; lipoprotein biosynthesis (diacylglyceryl transfer). Its function is as follows. Catalyzes the transfer of the diacylglyceryl group from phosphatidylglycerol to the sulfhydryl group of the N-terminal cysteine of a prolipoprotein, the first step in the formation of mature lipoproteins. This is Phosphatidylglycerol--prolipoprotein diacylglyceryl transferase from Mycobacteroides abscessus (strain ATCC 19977 / DSM 44196 / CCUG 20993 / CIP 104536 / JCM 13569 / NCTC 13031 / TMC 1543 / L948) (Mycobacterium abscessus).